Here is a 201-residue protein sequence, read N- to C-terminus: 3-isopropylmalate dehydratase small subunit (201 aa).

This sequence belongs to the LeuD family. LeuD type 1 subfamily. As to quaternary structure, heterodimer of LeuC and LeuD.

It carries out the reaction (2R,3S)-3-isopropylmalate = (2S)-2-isopropylmalate. The protein operates within amino-acid biosynthesis; L-leucine biosynthesis; L-leucine from 3-methyl-2-oxobutanoate: step 2/4. Catalyzes the isomerization between 2-isopropylmalate and 3-isopropylmalate, via the formation of 2-isopropylmaleate. This is 3-isopropylmalate dehydratase small subunit from Escherichia coli O157:H7.